An 85-amino-acid chain; its full sequence is Hepcidin (85 aa).

The signal sequence occupies residues 1–24 (MKTFSVAVAVAVVLAFICLQESSA). Positions 25–64 (VPANEEQELEQQIYFADPEMPVESCKMPYYMRENRQGSPA) are excised as a propeptide. 4 disulfides stabilise this stretch: cysteine 66–cysteine 83, cysteine 69–cysteine 72, cysteine 70–cysteine 79, and cysteine 73–cysteine 82.

Monomer. As to expression, expressed in all tissues tested, with highest levels of expression in kidney and lowest levels in liver. Intra-peritoneal injection of lipopolysaccharide results in increased expression in heart, spleen and stomach, but not in kidney or liver.

Its subcellular location is the secreted. Seems to act as a signaling molecule involved in the maintenance of iron homeostasis. Seems to be required in conjunction with HFE to regulate both intestinal iron absorption and iron storage in macrophages. Its function is as follows. Has very strong antibacterial activity against the marine Gram-negative bacteria V.alginolyticus (MIC=24 uM), V.fluvialis, V.harveyis (MIC=12 uM) and V.parahaemolyticus (MIC=6 uM). Has antibacterial activity against the Gram-negative bacteria A.hydrophila (MIC=6 uM), E.coli (MIC=24 uM), and E.coli BL21(DE3)plysS (MIC=6 uM), and the Gram-positive bacteria B.cereus (MIC=24 uM), B.subtilis (MIC=6 uM), C.glutamicum (MIC=3 uM), M.luteus (MIC=3 uM), M.lysodeikticus, S.aureus (MIC=6 uM) and S.epidermis (MIC=12 uM). Possesses antifungal activity against A.niger (MIC=24 uM), F.graminearum (MIC24 uM) and F.solani (MIC=24 uM), but lacks antifungal activity against the yeasts P.pastoris GS115 and C.albicans. This chain is Hepcidin, found in Larimichthys crocea (Large yellow croaker).